Here is a 459-residue protein sequence, read N- to C-terminus: Methylenetetrahydrofolate--tRNA-(uracil-5-)-methyltransferase TrmFO (459 aa).

Position 26–31 (26–31) interacts with FAD; it reads GGGLAG.

It belongs to the MnmG family. TrmFO subfamily. FAD serves as cofactor.

Its subcellular location is the cytoplasm. It catalyses the reaction uridine(54) in tRNA + (6R)-5,10-methylene-5,6,7,8-tetrahydrofolate + NADH + H(+) = 5-methyluridine(54) in tRNA + (6S)-5,6,7,8-tetrahydrofolate + NAD(+). The enzyme catalyses uridine(54) in tRNA + (6R)-5,10-methylene-5,6,7,8-tetrahydrofolate + NADPH + H(+) = 5-methyluridine(54) in tRNA + (6S)-5,6,7,8-tetrahydrofolate + NADP(+). In terms of biological role, catalyzes the folate-dependent formation of 5-methyl-uridine at position 54 (M-5-U54) in all tRNAs. In Synechococcus sp. (strain JA-2-3B'a(2-13)) (Cyanobacteria bacterium Yellowstone B-Prime), this protein is Methylenetetrahydrofolate--tRNA-(uracil-5-)-methyltransferase TrmFO.